The chain runs to 161 residues: uncharacterized protein (161 aa).

Residues 1 to 27 (MKKIGLLFMLCLAALFTIGFPAQQADA) form the signal peptide.

The protein localises to the secreted. This is an uncharacterized protein from Bacillus subtilis (strain 168).